The sequence spans 266 residues: Vitamin B12-binding protein (266 aa).

A signal peptide spans 1–22 (MAKQMFRALVALLLTLPVWLYA). Residues 25–266 (RVITLSPANT…QLCNALSQVN (242 aa)) form the Fe/B12 periplasmic-binding domain. Residues Y50 and 242-246 (DWFER) contribute to the cyanocob(III)alamin site. An intrachain disulfide couples C183 to C259.

It belongs to the BtuF family. The complex is composed of two ATP-binding proteins (BtuD), two transmembrane proteins (BtuC) and a solute-binding protein (BtuF).

The protein resides in the periplasm. Functionally, part of the ABC transporter complex BtuCDF involved in vitamin B12 import. Binds vitamin B12 and delivers it to the periplasmic surface of BtuC. This Salmonella paratyphi A (strain ATCC 9150 / SARB42) protein is Vitamin B12-binding protein.